Reading from the N-terminus, the 96-residue chain is Small ribosomal subunit protein bS18 (96 aa).

A disordered region spans residues 1-20; that stretch reads MSHGGKRRSGDGGSEGSSYS.

Belongs to the bacterial ribosomal protein bS18 family. In terms of assembly, part of the 30S ribosomal subunit. Forms a tight heterodimer with protein bS6.

Binds as a heterodimer with protein bS6 to the central domain of the 16S rRNA, where it helps stabilize the platform of the 30S subunit. In Anaplasma phagocytophilum (strain HZ), this protein is Small ribosomal subunit protein bS18.